The sequence spans 940 residues: Beta-mannosidase A (940 aa).

The signal sequence occupies residues 1–21 (MHFHGIATQAVLASNITTGSG). 7 N-linked (GlcNAc...) asparagine glycosylation sites follow: N15, N39, N79, N245, N314, N321, and N344. E476 (proton donor) is an active-site residue. Residues N534, N605, N626, N653, N733, N761, and N785 are each glycosylated (N-linked (GlcNAc...) asparagine).

It belongs to the glycosyl hydrolase 2 family. Beta-mannosidase A subfamily. Homodimer.

It is found in the secreted. It carries out the reaction Hydrolysis of terminal, non-reducing beta-D-mannose residues in beta-D-mannosides.. The protein operates within glycan metabolism; N-glycan degradation. Exoglycosidase that cleaves the single beta-linked mannose residue from the non-reducing end of beta-mannosidic oligosaccharides of various complexity and length. Involved in the degradation of polymeric mannan and galactomannan. This is Beta-mannosidase A (mndA) from Emericella nidulans (strain FGSC A4 / ATCC 38163 / CBS 112.46 / NRRL 194 / M139) (Aspergillus nidulans).